We begin with the raw amino-acid sequence, 306 residues long: Light-independent protochlorophyllide reductase iron-sulfur ATP-binding protein (306 aa).

Residues M1–Q31 are disordered. ATP is bound by residues G50–T55 and K79. S54 contributes to the Mg(2+) binding site. [4Fe-4S] cluster-binding residues include C135 and C169. N220–R221 is an ATP binding site.

The protein belongs to the NifH/BchL/ChlL family. As to quaternary structure, homodimer. Protochlorophyllide reductase is composed of three subunits; BchL, BchN and BchB. [4Fe-4S] cluster is required as a cofactor.

The catalysed reaction is chlorophyllide a + oxidized 2[4Fe-4S]-[ferredoxin] + 2 ADP + 2 phosphate = protochlorophyllide a + reduced 2[4Fe-4S]-[ferredoxin] + 2 ATP + 2 H2O. It participates in porphyrin-containing compound metabolism; bacteriochlorophyll biosynthesis (light-independent). In terms of biological role, component of the dark-operative protochlorophyllide reductase (DPOR) that uses Mg-ATP and reduced ferredoxin to reduce ring D of protochlorophyllide (Pchlide) to form chlorophyllide a (Chlide). This reaction is light-independent. The L component serves as a unique electron donor to the NB-component of the complex, and binds Mg-ATP. The protein is Light-independent protochlorophyllide reductase iron-sulfur ATP-binding protein of Jannaschia sp. (strain CCS1).